Reading from the N-terminus, the 50-residue chain is Defensin-like protein 1 (50 aa).

4 disulfide bridges follow: Cys2-Cys50, Cys14-Cys35, Cys20-Cys44, and Cys24-Cys46.

The protein belongs to the DEFL family.

It is found in the secreted. Its function is as follows. Possesses antimicrobial activity sensitive to inorganic cations. Binds specifically to the fungal plasma membrane. Has no inhibitory effect on insect gut alpha-amylase. This chain is Defensin-like protein 1, found in Aesculus hippocastanum (Horse chestnut).